Consider the following 289-residue polypeptide: tRNA-cytidine(32) 2-sulfurtransferase (289 aa).

The short motif at 39–44 is the PP-loop motif element; it reads SGGKDS. [4Fe-4S] cluster is bound by residues Cys-114, Cys-117, and Cys-205.

Belongs to the TtcA family. Homodimer. Mg(2+) serves as cofactor. [4Fe-4S] cluster is required as a cofactor.

It is found in the cytoplasm. The catalysed reaction is cytidine(32) in tRNA + S-sulfanyl-L-cysteinyl-[cysteine desulfurase] + AH2 + ATP = 2-thiocytidine(32) in tRNA + L-cysteinyl-[cysteine desulfurase] + A + AMP + diphosphate + H(+). It functions in the pathway tRNA modification. In terms of biological role, catalyzes the ATP-dependent 2-thiolation of cytidine in position 32 of tRNA, to form 2-thiocytidine (s(2)C32). The sulfur atoms are provided by the cysteine/cysteine desulfurase (IscS) system. The sequence is that of tRNA-cytidine(32) 2-sulfurtransferase from Deinococcus geothermalis (strain DSM 11300 / CIP 105573 / AG-3a).